Here is a 156-residue protein sequence, read N- to C-terminus: Ribonuclease H (156 aa).

Positions 1–142 (MGKQVEIFTD…CDELARAAAN (142 aa)) constitute an RNase H type-1 domain. The Mg(2+) site is built by Asp-10, Glu-48, Asp-70, and Asp-134.

The protein belongs to the RNase H family. In terms of assembly, monomer. It depends on Mg(2+) as a cofactor.

It localises to the cytoplasm. The enzyme catalyses Endonucleolytic cleavage to 5'-phosphomonoester.. Endonuclease that specifically degrades the RNA of RNA-DNA hybrids. This chain is Ribonuclease H, found in Photorhabdus laumondii subsp. laumondii (strain DSM 15139 / CIP 105565 / TT01) (Photorhabdus luminescens subsp. laumondii).